Consider the following 142-residue polypeptide: Large ribosomal subunit protein uL11 (142 aa).

The protein belongs to the universal ribosomal protein uL11 family. In terms of assembly, part of the ribosomal stalk of the 50S ribosomal subunit. Interacts with L10 and the large rRNA to form the base of the stalk. L10 forms an elongated spine to which L12 dimers bind in a sequential fashion forming a multimeric L10(L12)X complex. One or more lysine residues are methylated.

Its function is as follows. Forms part of the ribosomal stalk which helps the ribosome interact with GTP-bound translation factors. The chain is Large ribosomal subunit protein uL11 from Buchnera aphidicola subsp. Schizaphis graminum (strain Sg).